The sequence spans 359 residues: MPQELVYTLQQLADLLKVEVQGNTETPISGVEEISEAQSHHVTFLDNEKYSRFIKNTEAGAIILSKAQAQKYGHLNKNFLIVSEFPSIAFQKCIELFIPPIDSGFPGIHPTAVIHPTAHIGKDVFLEPYAVICQHAQIGDSSHIGAGSVIGAFSTLGEHCYVHPKVVIRERVVIGKRVIVQPGAIIGACGFGYITNAFGRHKHLKHLGQVIIEDDVEIGANTTIDRGRFKNSVIREGTKIDNQVQIAHHVEVGKHSMIVAQAGIAGSTKIGNHVIIGGQTGITGHISITDHVIMMAQTGVTKSISSPGIYGGAPARPYQEIHRQVAKIRGLPKLEERLGMLEEKVKGLSAQSEEAQITP.

Residue histidine 248 is the Proton acceptor of the active site.

Belongs to the transferase hexapeptide repeat family. LpxD subfamily. As to quaternary structure, homotrimer.

It carries out the reaction a UDP-3-O-[(3R)-3-hydroxyacyl]-alpha-D-glucosamine + a (3R)-hydroxyacyl-[ACP] = a UDP-2-N,3-O-bis[(3R)-3-hydroxyacyl]-alpha-D-glucosamine + holo-[ACP] + H(+). Its pathway is bacterial outer membrane biogenesis; LPS lipid A biosynthesis. In terms of biological role, catalyzes the N-acylation of UDP-3-O-acylglucosamine using 3-hydroxyacyl-ACP as the acyl donor. Is involved in the biosynthesis of lipid A, a phosphorylated glycolipid that anchors the lipopolysaccharide to the outer membrane of the cell. This chain is UDP-3-O-acylglucosamine N-acyltransferase, found in Chlamydia felis (strain Fe/C-56) (Chlamydophila felis).